Here is a 366-residue protein sequence, read N- to C-terminus: Inositol 2-dehydrogenase (366 aa).

This sequence belongs to the Gfo/Idh/MocA family. As to quaternary structure, homotetramer.

The catalysed reaction is myo-inositol + NAD(+) = scyllo-inosose + NADH + H(+). In terms of biological role, involved in the oxidation of myo-inositol (MI) to 2-keto-myo-inositol (2KMI or 2-inosose). The protein is Inositol 2-dehydrogenase of Rhodococcus jostii (strain RHA1).